Here is a 138-residue protein sequence, read N- to C-terminus: Large ribosomal subunit protein uL16 (138 aa).

The protein belongs to the universal ribosomal protein uL16 family. As to quaternary structure, part of the 50S ribosomal subunit.

Binds 23S rRNA and is also seen to make contacts with the A and possibly P site tRNAs. The polypeptide is Large ribosomal subunit protein uL16 (Acidiphilium cryptum (strain JF-5)).